Consider the following 189-residue polypeptide: Ras-like protein 1 (189 aa).

Residue 10-17 participates in GTP binding; that stretch reads GAGGVGKS. The Effector region motif lies at 32-40; sequence YDPTIEDSY. GTP-binding positions include 57–61 and 116–119; these read DTAGQ and NKCD. Cys-186 carries the post-translational modification Cysteine methyl ester. Cys-186 carries S-geranylgeranyl cysteine lipidation. Positions 187 to 189 are cleaved as a propeptide — removed in mature form; it reads KML.

Belongs to the small GTPase superfamily. Ras family.

The protein resides in the cell membrane. The catalysed reaction is GTP + H2O = GDP + phosphate + H(+). Alternates between an inactive form bound to GDP and an active form bound to GTP. Activated by a guanine nucleotide-exchange factor (GEF) and inactivated by a GTPase-activating protein (GAP). In terms of biological role, ras proteins bind GDP/GTP and possess intrinsic GTPase activity. Plays a role in eye development by regulating cell growth, survival of postmitotic ommatidial cells and differentiation of photoreceptor cells. During larval development, mediates Ptth/tor signaling leading to the production of ecdysone, a hormone required for the initiation of metamorphosis. In Drosophila grimshawi (Hawaiian fruit fly), this protein is Ras-like protein 1.